The sequence spans 199 residues: MLSALRTAGAVGTRRLASTQAIASNSEAPKGIATTGTPFLNPSSKAEYALARLDDVLNLAQRGSIWPLTFGLACCAVEMMHFAAPRYDMDRYGVVFRASPRQADLIFVAGTVTNKMAPALRRIYDQMPEAKWVISMGSCANGGGYYHYAYSVLRGCDRVIPVDIYVPGCPPTAEALLYGVLQLQKKIKRKREAQLWYRR.

[4Fe-4S] cluster is bound by residues cysteine 74, cysteine 75, cysteine 139, and cysteine 169.

Belongs to the complex I 20 kDa subunit family. As to quaternary structure, complex I is composed of 45 different subunits This is a component of the iron-sulfur (IP) fragment of the enzyme. The cofactor is [4Fe-4S] cluster.

The protein localises to the mitochondrion. It catalyses the reaction a ubiquinone + NADH + 5 H(+)(in) = a ubiquinol + NAD(+) + 4 H(+)(out). Its function is as follows. Core subunit of the mitochondrial membrane respiratory chain NADH dehydrogenase (Complex I) that is believed to belong to the minimal assembly required for catalysis. Complex I functions in the transfer of electrons from NADH to the respiratory chain. The immediate electron acceptor for the enzyme is believed to be ubiquinone. This chain is Probable NADH dehydrogenase [ubiquinone] iron-sulfur protein 7, mitochondrial (nduf-7), found in Caenorhabditis elegans.